The primary structure comprises 416 residues: Phosphatidylinositol 5-phosphate 4-kinase type-2 beta (416 aa).

S2 is subject to N-acetylserine. T8 bears the Phosphothreonine mark. At S19 the chain carries Phosphoserine. The PIPK domain occupies 38–415 (ASEPILSVLM…RFNEFMSNIL (378 aa)). A required for interaction with PIP5K1A region spans residues 64–70 (VMLMPDD). N6-acetyllysine is present on residues K94 and K150. ATP contacts are provided by residues 202-204 (RNV) and K214. GTP is bound by residues 203 to 204 (NV) and K214. Phosphothreonine is present on T322. S326 carries the phosphoserine modification. D369 is a binding site for GTP.

Homodimer. Binds TNFRSF1A. Interacts with PIP4K2A; the interaction suppresses ubiquitination by the SPOP/CUL3 complex. Probably interacts with PIP5K1A; the interaction inhibits PIP5K1A kinase activity. Post-translationally, ubiquitinated by the SPOP/CUL3 complex. Ubiquitination is stimulated by PtdIns5P levels. In terms of processing, phosphorylated on serine residues.

Its subcellular location is the endoplasmic reticulum membrane. The protein localises to the cell membrane. It localises to the nucleus. The protein resides in the cytoplasm. The enzyme catalyses a 1,2-diacyl-sn-glycero-3-phospho-(1D-myo-inositol-5-phosphate) + ATP = a 1,2-diacyl-sn-glycero-3-phospho-(1D-myo-inositol-4,5-bisphosphate) + ADP + H(+). It catalyses the reaction 1,2-dihexadecanoyl-sn-glycero-3-phospho-(1D-myo-inositol-5-phosphate) + ATP = 1,2-dihexadecanoyl-sn-glycero-3-phospho-(1D-myo-inositol-4,5-bisphosphate) + ADP + H(+). The catalysed reaction is 1,2-dihexadecanoyl-sn-glycero-3-phospho-(1D-myo-inositol-5-phosphate) + GTP = 1,2-dihexadecanoyl-sn-glycero-3-phospho-(1D-myo-inositol-4,5-bisphosphate) + GDP + H(+). In terms of biological role, participates in the biosynthesis of phosphatidylinositol 4,5-bisphosphate. Preferentially utilizes GTP, rather than ATP, for PI(5)P phosphorylation and its activity reflects changes in direct proportion to the physiological GTP concentration. Its GTP-sensing activity is critical for metabolic adaptation. PIP4Ks negatively regulate insulin signaling through a catalytic-independent mechanism. They interact with PIP5Ks and suppress PIP5K-mediated PtdIns(4,5)P2 synthesis and insulin-dependent conversion to PtdIns(3,4,5)P3. The sequence is that of Phosphatidylinositol 5-phosphate 4-kinase type-2 beta from Rattus norvegicus (Rat).